Here is a 484-residue protein sequence, read N- to C-terminus: N-succinylglutamate 5-semialdehyde dehydrogenase (484 aa).

Position 221 to 226 (221 to 226) interacts with NAD(+); sequence GSAAAG. Residues Glu244 and Cys278 contribute to the active site.

The protein belongs to the aldehyde dehydrogenase family. AstD subfamily.

The enzyme catalyses N-succinyl-L-glutamate 5-semialdehyde + NAD(+) + H2O = N-succinyl-L-glutamate + NADH + 2 H(+). It participates in amino-acid degradation; L-arginine degradation via AST pathway; L-glutamate and succinate from L-arginine: step 4/5. In terms of biological role, catalyzes the NAD-dependent reduction of succinylglutamate semialdehyde into succinylglutamate. The protein is N-succinylglutamate 5-semialdehyde dehydrogenase of Caulobacter sp. (strain K31).